Here is a 247-residue protein sequence, read N- to C-terminus: PHD finger protein ALFIN-LIKE 3 (247 aa).

The disordered stretch occupies residues 147-178 (DRSGVDSSGKSKHSTKRTGEGQVKRSRVVAEE). The PHD-type zinc finger occupies 188–240 (ETFCGTCGGLYNANEFWIGCDICERWFHGKCVRITPAKAEHIKHYKCPDCSSS).

Belongs to the Alfin family. As to quaternary structure, interacts with H3K4me3 and to a lesser extent with H3K4me2.

It is found in the nucleus. In terms of biological role, histone-binding component that specifically recognizes H3 tails trimethylated on 'Lys-4' (H3K4me3), which mark transcription start sites of virtually all active genes. This is PHD finger protein ALFIN-LIKE 3 from Oryza sativa subsp. indica (Rice).